The chain runs to 1422 residues: DNA-directed RNA polymerase subunit beta (1422 aa).

The interval 1392-1422 (QAAREAAERDLGGGPLGAPRGAVASGEKSSA) is disordered.

It belongs to the RNA polymerase beta chain family. As to quaternary structure, the RNAP catalytic core consists of 2 alpha, 1 beta, 1 beta' and 1 omega subunit. When a sigma factor is associated with the core the holoenzyme is formed, which can initiate transcription.

The enzyme catalyses RNA(n) + a ribonucleoside 5'-triphosphate = RNA(n+1) + diphosphate. Its function is as follows. DNA-dependent RNA polymerase catalyzes the transcription of DNA into RNA using the four ribonucleoside triphosphates as substrates. This is DNA-directed RNA polymerase subunit beta from Anaeromyxobacter dehalogenans (strain 2CP-C).